Reading from the N-terminus, the 26-residue chain is Cytochrome c oxidase subunit 2 (26 aa).

This sequence belongs to the cytochrome c oxidase subunit 2 family. Component of the cytochrome c oxidase (complex IV, CIV), a multisubunit enzyme composed of a catalytic core of 3 subunits and several supernumerary subunits. The complex exists as a monomer or a dimer and forms supercomplexes (SCs) in the inner mitochondrial membrane with ubiquinol-cytochrome c oxidoreductase (cytochrome b-c1 complex, complex III, CIII). The cofactor is Cu cation.

The protein localises to the mitochondrion inner membrane. The catalysed reaction is 4 Fe(II)-[cytochrome c] + O2 + 8 H(+)(in) = 4 Fe(III)-[cytochrome c] + 2 H2O + 4 H(+)(out). Its function is as follows. Component of the cytochrome c oxidase, the last enzyme in the mitochondrial electron transport chain which drives oxidative phosphorylation. The respiratory chain contains 3 multisubunit complexes succinate dehydrogenase (complex II, CII), ubiquinol-cytochrome c oxidoreductase (cytochrome b-c1 complex, complex III, CIII) and cytochrome c oxidase (complex IV, CIV), that cooperate to transfer electrons derived from NADH and succinate to molecular oxygen, creating an electrochemical gradient over the inner membrane that drives transmembrane transport and the ATP synthase. Cytochrome c oxidase is the component of the respiratory chain that catalyzes the reduction of oxygen to water. Electrons originating from reduced cytochrome c in the intermembrane space (IMS) are transferred via the dinuclear copper A center (CU(A)) of subunit 2 and heme A of subunit 1 to the active site in subunit 1, a binuclear center (BNC) formed by heme A3 and copper B (CU(B)). The BNC reduces molecular oxygen to 2 water molecules using 4 electrons from cytochrome c in the IMS and 4 protons from the mitochondrial matrix. The protein is Cytochrome c oxidase subunit 2 (COX2) of Solanum tuberosum (Potato).